A 632-amino-acid polypeptide reads, in one-letter code: Bifunctional protein GlmU (632 aa).

The interval 1 to 229 (MAERELSVAI…PQEIVGVNDR (229 aa)) is pyrophosphorylase. Residues 11 to 14 (LAAG), lysine 25, glutamine 76, and 81 to 82 (GT) contribute to the UDP-N-acetyl-alpha-D-glucosamine site. Mg(2+) is bound at residue aspartate 106. 4 residues coordinate UDP-N-acetyl-alpha-D-glucosamine: glycine 143, glutamate 158, asparagine 173, and asparagine 227. Asparagine 227 provides a ligand contact to Mg(2+). A linker region spans residues 230–250 (RQLAQAYQILQDRLKEAWMEA). The N-acetyltransferase stretch occupies residues 251–632 (GVTFVDPDSS…ADNSRPKSLQ (382 aa)). UDP-N-acetyl-alpha-D-glucosamine contacts are provided by arginine 332 and lysine 350. Histidine 362 (proton acceptor) is an active-site residue. Positions 365 and 376 each coordinate UDP-N-acetyl-alpha-D-glucosamine. Acetyl-CoA-binding positions include alanine 379, 385–386 (NY), alanine 422, and arginine 441. The interval 600–632 (VAGDPCWPSPPPQPQQNQQTKPEADNSRPKSLQ) is disordered. The span at 621-632 (PEADNSRPKSLQ) shows a compositional bias: basic and acidic residues.

In the N-terminal section; belongs to the N-acetylglucosamine-1-phosphate uridyltransferase family. The protein in the C-terminal section; belongs to the transferase hexapeptide repeat family. As to quaternary structure, homotrimer. Mg(2+) serves as cofactor.

The protein localises to the cytoplasm. It catalyses the reaction alpha-D-glucosamine 1-phosphate + acetyl-CoA = N-acetyl-alpha-D-glucosamine 1-phosphate + CoA + H(+). The catalysed reaction is N-acetyl-alpha-D-glucosamine 1-phosphate + UTP + H(+) = UDP-N-acetyl-alpha-D-glucosamine + diphosphate. It functions in the pathway nucleotide-sugar biosynthesis; UDP-N-acetyl-alpha-D-glucosamine biosynthesis; N-acetyl-alpha-D-glucosamine 1-phosphate from alpha-D-glucosamine 6-phosphate (route II): step 2/2. The protein operates within nucleotide-sugar biosynthesis; UDP-N-acetyl-alpha-D-glucosamine biosynthesis; UDP-N-acetyl-alpha-D-glucosamine from N-acetyl-alpha-D-glucosamine 1-phosphate: step 1/1. It participates in bacterial outer membrane biogenesis; LPS lipid A biosynthesis. In terms of biological role, catalyzes the last two sequential reactions in the de novo biosynthetic pathway for UDP-N-acetylglucosamine (UDP-GlcNAc). The C-terminal domain catalyzes the transfer of acetyl group from acetyl coenzyme A to glucosamine-1-phosphate (GlcN-1-P) to produce N-acetylglucosamine-1-phosphate (GlcNAc-1-P), which is converted into UDP-GlcNAc by the transfer of uridine 5-monophosphate (from uridine 5-triphosphate), a reaction catalyzed by the N-terminal domain. The chain is Bifunctional protein GlmU from Synechococcus sp. (strain JA-2-3B'a(2-13)) (Cyanobacteria bacterium Yellowstone B-Prime).